The sequence spans 225 residues: Deoxyribose-phosphate aldolase (225 aa).

The active-site Proton donor/acceptor is the Asp96. Lys157 acts as the Schiff-base intermediate with acetaldehyde in catalysis. The active-site Proton donor/acceptor is the Lys185.

It belongs to the DeoC/FbaB aldolase family. DeoC type 1 subfamily.

It is found in the cytoplasm. It carries out the reaction 2-deoxy-D-ribose 5-phosphate = D-glyceraldehyde 3-phosphate + acetaldehyde. It functions in the pathway carbohydrate degradation; 2-deoxy-D-ribose 1-phosphate degradation; D-glyceraldehyde 3-phosphate and acetaldehyde from 2-deoxy-alpha-D-ribose 1-phosphate: step 2/2. In terms of biological role, catalyzes a reversible aldol reaction between acetaldehyde and D-glyceraldehyde 3-phosphate to generate 2-deoxy-D-ribose 5-phosphate. The chain is Deoxyribose-phosphate aldolase from Microcystis aeruginosa (strain NIES-843 / IAM M-2473).